The sequence spans 742 residues: Two-component response regulator-like PRR37 (742 aa).

Positions 63–181 (KVLLVDSDDS…ELKNLWQHVW (119 aa)) constitute a Response regulatory domain. Residues 186–195 (SSSGSGSESG) are compositionally biased toward low complexity. Disordered stretches follow at residues 186–249 (SSSG…SWTK), 290–346 (PCTS…PLQN), 375–402 (DAQQ…NRDN), 478–570 (MKSN…VQSN), 590–671 (NGGS…GNDM), and 697–742 (NFGK…AADR). A compositionally biased stretch (polar residues) spans 236–248 (DNGSGTQAQSSWT). A compositionally biased stretch (basic and acidic residues) spans 299–313 (KQKETNDDFKGKDLE). Positions 318-330 (RNLNTAYQSSPNE) are enriched in polar residues. Basic and acidic residues predominate over residues 331–341 (RSIKPTDRRNE). Positions 380–390 (ARATNAPNCSS) are enriched in polar residues. Residues 490–502 (GSNGSSNNNDMGS) show a composition bias toward low complexity. A compositionally biased stretch (polar residues) spans 503–512 (TTKNVVTKPS). Positions 618-634 (NGSNSGSNNGSNGQNGS) are enriched in low complexity. Residues 656 to 667 (GPGGGNGSGSGS) show a composition bias toward gly residues. The CCT domain occupies 682-724 (RVAAVIKFRQKRKERNFGKKVRYQSRKRLAEQRPRVRGQFVRQ). Residues 697-708 (NFGKKVRYQSRK) show a composition bias toward basic residues. Low complexity predominate over residues 719 to 731 (GQFVRQAVQDQQQ).

Belongs to the ARR-like family.

Its subcellular location is the nucleus. Functionally, controls photoperiodic flowering response. Seems to be one of the component of the circadian clock. Expression of several members of the ARR-like family is controlled by circadian rhythm. The particular coordinated sequential expression of PRR73, PRR37, PRR95, PRR59 and PPR1 result to circadian waves that may be at the basis of the endogenous circadian clock. This is Two-component response regulator-like PRR37 (PRR37) from Oryza sativa subsp. indica (Rice).